The sequence spans 654 residues: tRNA 5-methylaminomethyl-2-thiouridine biosynthesis bifunctional protein MnmC (654 aa).

Residues 1–236 (MSTLLQHAQI…KWEVMSGAYV (236 aa)) are tRNA (mnm(5)s(2)U34)-methyltransferase. The segment at 262–654 (IGAGLAGSTT…FALRRLIRGK (393 aa)) is FAD-dependent cmnm(5)s(2)U34 oxidoreductase.

This sequence in the N-terminal section; belongs to the methyltransferase superfamily. tRNA (mnm(5)s(2)U34)-methyltransferase family. It in the C-terminal section; belongs to the DAO family. FAD is required as a cofactor.

The protein localises to the cytoplasm. The enzyme catalyses 5-aminomethyl-2-thiouridine(34) in tRNA + S-adenosyl-L-methionine = 5-methylaminomethyl-2-thiouridine(34) in tRNA + S-adenosyl-L-homocysteine + H(+). In terms of biological role, catalyzes the last two steps in the biosynthesis of 5-methylaminomethyl-2-thiouridine (mnm(5)s(2)U) at the wobble position (U34) in tRNA. Catalyzes the FAD-dependent demodification of cmnm(5)s(2)U34 to nm(5)s(2)U34, followed by the transfer of a methyl group from S-adenosyl-L-methionine to nm(5)s(2)U34, to form mnm(5)s(2)U34. The protein is tRNA 5-methylaminomethyl-2-thiouridine biosynthesis bifunctional protein MnmC of Pseudomonas putida (strain GB-1).